We begin with the raw amino-acid sequence, 2274 residues long: Adenomatous polyposis coli protein 2 (2274 aa).

A coiled-coil region spans residues 5–59; it reads MASYEQLVRQVEALKAENTHLRQELRDNSSHLSKLETETSGMKEVLKHLQGKLEQ. Disordered stretches follow at residues 97–120 and 248–269; these read GPEP…KDSF and VEEE…QPGN. 6 ARM repeats span residues 301 to 341, 472 to 511, 515 to 555, 557 to 602, 608 to 647, and 650 to 689; these read PESC…GAKD, ANKA…NLSW, INSK…NLSA, STEN…NVSS, EDYR…NLSA, and PRDQ…NLLA. Residues 832–856 are a coiled coil; it reads AAKAKAKLALAVARIDRLVEDISAL. 3 disordered regions span residues 859–901, 1061–1143, and 1165–1216; these read SSDD…GSRA, CSSL…NCVQ, and SIAS…TSQF. Low complexity predominate over residues 861 to 870; the sequence is DDSFSLSSGD. Copy 1 of the repeat occupies 1049–1068; the sequence is LVAQDGPMSLSRCSSLSSLS. A 5 X 20 AA approximate repeat of F-X-V-E-X-T-P-X-C-F-S-R-X-S-S-L-S-S-L-S region spans residues 1049 to 1565; that stretch reads LVAQDGPMSL…SLTSSASSLS (517 aa). The interval 1049-1565 is interaction with CTNNB1; that stretch reads LVAQDGPMSL…SLTSSASSLS (517 aa). Residues 1077-1086 are compositionally biased toward polar residues; that stretch reads QAENLDSDSS. Residues 1092 to 1103 are compositionally biased toward low complexity; it reads EAGPGEAELGRA. Polar residues predominate over residues 1133–1143; that stretch reads TPSSSSENCVQ. Repeat unit 2 spans residues 1140–1159; sequence NCVQETPLVLSRCSSVSSLG. Repeat unit 3 spans residues 1250–1269; it reads FTVEKPDENFSCASSLSALA. 6 disordered regions span residues 1290–1323, 1368–1480, 1493–1631, 1699–2003, 2022–2122, and 2135–2274; these read ERAV…SATD, RGDD…LQSL, FYDS…DIRP, STLQ…RGRP, PRQP…IKDE, and TALP…SLLE. Positions 1374–1397 are enriched in polar residues; it reads TDSAEGTPVNFSSAASLSDETLQG. The stretch at 1375–1394 is repeat 4; sequence DSAEGTPVNFSSAASLSDET. The segment covering 1399–1411 has biased composition (basic and acidic residues); the sequence is SRDKPAGPGDRQK. Residues 1455 to 1470 are compositionally biased toward polar residues; sequence RPQSARSNRDSSCQTR. Positions 1517–1529 are enriched in basic and acidic residues; it reads LKREKPAGRKETP. Residues 1546 to 1565 form repeat 5; sequence LIVDETPPCYSLTSSASSLS. Low complexity predominate over residues 1556–1574; that stretch reads SLTSSASSLSEPEAPEQPA. Residues Ser1563 and Ser1565 each carry the phosphoserine modification. Positions 1608–1624 are enriched in basic residues; the sequence is PRRRTQVPGSRRRKPRA. Composition is skewed to low complexity over residues 1780-1795 and 1839-1868; these read SGPC…SGTT and LAKT…TPTG. A required for localization to microtubules and function in microtubule stabilization region spans residues 1792 to 1871; that stretch reads SGTTQPETVT…PLATPTGGPL (80 aa). Ser1861 carries the post-translational modification Phosphoserine. Residues 1910–1921 are compositionally biased toward pro residues; sequence RVPPPLARPSPE. 2 stretches are compositionally biased toward low complexity: residues 1945 to 1955 and 1983 to 1997; these read RMASARSSGSE and LSSA…QAAS. Positions 2037-2114 are interaction with MAPRE1 and MAPRE3; that stretch reads GLAPLAPRRT…PLPRVAPPGT (78 aa). Residues 2165–2179 are compositionally biased toward polar residues; that stretch reads DVATSKTNSSTSPSL.

This sequence belongs to the adenomatous polyposis coli (APC) family. In terms of assembly, interacts with PSRC1. Interacts with MAPRE3. Interacts with APC, CTNNB1, TP53BP2, MAPRE1 and possibly with AXIN2. Expressed in brain and other neural tissues.

The protein resides in the cytoplasm. Its subcellular location is the cytoskeleton. It localises to the golgi apparatus. It is found in the perinuclear region. Stabilizes microtubules and may regulate actin fiber dynamics through the activation of Rho family GTPases. May also function in Wnt signaling by promoting the rapid degradation of CTNNB1. The polypeptide is Adenomatous polyposis coli protein 2 (Apc2) (Mus musculus (Mouse)).